The primary structure comprises 330 residues: D-lactate dehydrogenase (330 aa).

NAD(+)-binding positions include 155 to 156 (RI), Asp175, 206 to 207 (MP), Asn212, 233 to 235 (MAR), and Asp259. Residue Arg235 is part of the active site. Glu264 is an active-site residue. Catalysis depends on His296, which acts as the Proton donor.

This sequence belongs to the D-isomer specific 2-hydroxyacid dehydrogenase family.

It catalyses the reaction (R)-lactate + NAD(+) = pyruvate + NADH + H(+). In Streptococcus pyogenes serotype M1, this protein is D-lactate dehydrogenase (ldhD).